Consider the following 481-residue polypeptide: Ribosomal protein uS12 methylthiotransferase RimO (481 aa).

The region spanning 38–148 (NRIGFVSLGC…VLKHVHKYVP (111 aa)) is the MTTase N-terminal domain. [4Fe-4S] cluster contacts are provided by Cys-47, Cys-83, Cys-112, Cys-180, Cys-184, and Cys-187. The Radical SAM core domain maps to 166 to 403 (LTPKHYAYLK…MEVQAEISAE (238 aa)). The 67-residue stretch at 406–472 (ARFVGRTMDI…EHDLWAELVD (67 aa)) folds into the TRAM domain.

Belongs to the methylthiotransferase family. RimO subfamily. It depends on [4Fe-4S] cluster as a cofactor.

The protein localises to the cytoplasm. The enzyme catalyses L-aspartate(89)-[ribosomal protein uS12]-hydrogen + (sulfur carrier)-SH + AH2 + 2 S-adenosyl-L-methionine = 3-methylsulfanyl-L-aspartate(89)-[ribosomal protein uS12]-hydrogen + (sulfur carrier)-H + 5'-deoxyadenosine + L-methionine + A + S-adenosyl-L-homocysteine + 2 H(+). Its function is as follows. Catalyzes the methylthiolation of an aspartic acid residue of ribosomal protein uS12. This is Ribosomal protein uS12 methylthiotransferase RimO from Shewanella oneidensis (strain ATCC 700550 / JCM 31522 / CIP 106686 / LMG 19005 / NCIMB 14063 / MR-1).